A 961-amino-acid polypeptide reads, in one-letter code: Zinc finger protein basonuclin-1 (961 aa).

Positions 210 to 219 (MTFMLPFQFF) are hydrophobic. C2H2-type zinc fingers lie at residues 325–348 (VFCTACEKTFYDKGTLKIHYNAVH) and 353–382 (HKCTIEGCNMVFSSLRSRNRHSANPNPRLH). Positions 370–393 (RNRHSANPNPRLHMPMNRNNRDKD) are disordered. The Nuclear localization signal signature appears at 501–507 (PKKKSRK). Residues S505 and S509 each carry the phosphoserine modification. The segment at 523 to 572 (EEKRHSLSSDDEVPLQVVSEDEPEDSSPRSDRVPEEQHTQLSLEEPLPQG) is disordered. Residues 531 to 547 (SDDEVPLQVVSEDEPED) are compositionally biased toward acidic residues. Residues 548–560 (SSPRSDRVPEEQH) show a composition bias toward basic and acidic residues. 2 consecutive C2H2-type zinc fingers follow at residues 687-711 (FQCDICKKTFKNACSMKTHEKNTHA) and 715-743 (HACTVEGCGAAFPSRRSRDRHSSNLSLHQ). A disordered region spans residues 810–864 (ESYNSGPPSEGTILDLSTTSSMKSESSSHSSWDSDGVSEEGTALMEDSDGNCEGQ). A compositionally biased stretch (low complexity) spans 826 to 844 (STTSSMKSESSSHSSWDSD). 2 C2H2-type zinc fingers span residues 895–918 (ITCHLCQKIYSNKGTFRAHYKTVH) and 923–950 (HKCKVPGCNTMFSSVRSRNRHSQNPNLH). The disordered stretch occupies residues 937–961 (VRSRNRHSQNPNLHKSLASSPSHLQ).

Interacts with HSF2BP (via C-terminus). In terms of processing, phosphorylation on Ser-505 and Ser-509 leads to cytoplasmic localization. In terms of tissue distribution, epidermis and germ cells of testis and ovary.

It localises to the nucleus. The protein localises to the cytoplasm. Its subcellular location is the nucleoplasm. Functionally, transcriptional activator. It is likely involved in the regulation of keratinocytes terminal differentiation in squamous epithelia and hair follicles. Required for the maintenance of spermatogenesis. It is involved in the positive regulation of oocyte maturation, probably acting through the control of BMP15 levels and regulation of AKT signaling cascade. May also play a role in the early development of embryos. This chain is Zinc finger protein basonuclin-1 (Bnc1), found in Mus musculus (Mouse).